Consider the following 598-residue polypeptide: Probable polysaccharide biosynthesis protein EpsC (598 aa).

A run of 4 helical transmembrane segments spans residues 1–21 (MIIALDTYLVLNSVIAGYQFL), 31–51 (GALLLTAVSLLLSYHVCAFLF), 63–83 (LGELIVLLKGITLSAAVTGVI), and 87–107 (VYHTMFFRLLTACWVLQLLSI).

It belongs to the polysaccharide synthase family.

Its subcellular location is the cell membrane. Involved in biofilm formation. The sequence is that of Probable polysaccharide biosynthesis protein EpsC (epsC) from Bacillus subtilis (strain 168).